A 306-amino-acid polypeptide reads, in one-letter code: Acetyl-coenzyme A carboxylase carboxyl transferase subunit beta (306 aa).

Positions 27–296 (LWHKCPSCEA…PEFVAAPVEP (270 aa)) constitute a CoA carboxyltransferase N-terminal domain. Cys31, Cys34, Cys50, and Cys53 together coordinate Zn(2+). The C4-type zinc-finger motif lies at 31-53 (CPSCEAVLYRPELEKTLDVCPKC).

This sequence belongs to the AccD/PCCB family. In terms of assembly, acetyl-CoA carboxylase is a heterohexamer composed of biotin carboxyl carrier protein (AccB), biotin carboxylase (AccC) and two subunits each of ACCase subunit alpha (AccA) and ACCase subunit beta (AccD). Zn(2+) serves as cofactor.

It is found in the cytoplasm. It carries out the reaction N(6)-carboxybiotinyl-L-lysyl-[protein] + acetyl-CoA = N(6)-biotinyl-L-lysyl-[protein] + malonyl-CoA. The protein operates within lipid metabolism; malonyl-CoA biosynthesis; malonyl-CoA from acetyl-CoA: step 1/1. Component of the acetyl coenzyme A carboxylase (ACC) complex. Biotin carboxylase (BC) catalyzes the carboxylation of biotin on its carrier protein (BCCP) and then the CO(2) group is transferred by the transcarboxylase to acetyl-CoA to form malonyl-CoA. The polypeptide is Acetyl-coenzyme A carboxylase carboxyl transferase subunit beta (Pseudomonas fluorescens (strain ATCC BAA-477 / NRRL B-23932 / Pf-5)).